The sequence spans 93 residues: Putative protein adenylyltransferase MJ0435 (93 aa).

Residues 26-40 (GSYARNEQKETSDID) carry the GSX(10)DXD motif motif. Residues aspartate 38, aspartate 40, and aspartate 70 each contribute to the Mg(2+) site.

The protein belongs to the MntA antitoxin family. In terms of assembly, probably forms a complex with cognate toxin MJ0434. Mg(2+) serves as cofactor.

The enzyme catalyses L-tyrosyl-[protein] + ATP = O-(5'-adenylyl)-L-tyrosyl-[protein] + diphosphate. The catalysed reaction is O-(5'-adenylyl)-L-tyrosyl-[protein] + ATP = O-[5'-(adenylyl-(5'-&gt;3')-adenylyl)]-L-tyrosyl-[protein] + diphosphate. In terms of biological role, probable antitoxin component of a putative type VII toxin-antitoxin (TA) system. Neutralizes cognate toxic MJ0434 by di-AMPylation. The protein is Putative protein adenylyltransferase MJ0435 of Methanocaldococcus jannaschii (strain ATCC 43067 / DSM 2661 / JAL-1 / JCM 10045 / NBRC 100440) (Methanococcus jannaschii).